Reading from the N-terminus, the 42-residue chain is Bacteriocin bavaricin-MN (42 aa).

A disulfide bond links Cys-10 and Cys-15.

This sequence belongs to the bacteriocin class IIA/YGNGV family.

Its subcellular location is the secreted. Has antimicrobial activity. This is Bacteriocin bavaricin-MN from Latilactobacillus sakei (Lactobacillus sakei).